The primary structure comprises 504 residues: Histidine ammonia-lyase (504 aa).

Residues 142-144 (ASG) constitute a cross-link (5-imidazolinone (Ala-Gly)). The residue at position 143 (S143) is a 2,3-didehydroalanine (Ser).

It belongs to the PAL/histidase family. In terms of processing, contains an active site 4-methylidene-imidazol-5-one (MIO), which is formed autocatalytically by cyclization and dehydration of residues Ala-Ser-Gly.

The protein resides in the cytoplasm. It carries out the reaction L-histidine = trans-urocanate + NH4(+). It functions in the pathway amino-acid degradation; L-histidine degradation into L-glutamate; N-formimidoyl-L-glutamate from L-histidine: step 1/3. The chain is Histidine ammonia-lyase from Staphylococcus aureus (strain USA300).